Reading from the N-terminus, the 241-residue chain is 2,3,4,5-tetrahydropyridine-2,6-dicarboxylate N-acetyltransferase (241 aa).

The protein belongs to the transferase hexapeptide repeat family. DapH subfamily.

The enzyme catalyses (S)-2,3,4,5-tetrahydrodipicolinate + acetyl-CoA + H2O = L-2-acetamido-6-oxoheptanedioate + CoA. The protein operates within amino-acid biosynthesis; L-lysine biosynthesis via DAP pathway; LL-2,6-diaminopimelate from (S)-tetrahydrodipicolinate (acetylase route): step 1/3. Catalyzes the transfer of an acetyl group from acetyl-CoA to tetrahydrodipicolinate. The polypeptide is 2,3,4,5-tetrahydropyridine-2,6-dicarboxylate N-acetyltransferase (Thermoanaerobacter pseudethanolicus (strain ATCC 33223 / 39E) (Clostridium thermohydrosulfuricum)).